A 524-amino-acid chain; its full sequence is Phosphoenolpyruvate carboxykinase (ATP) (524 aa).

Substrate contacts are provided by arginine 52, tyrosine 188, and lysine 194. ATP is bound by residues lysine 194, histidine 213, and 229–237 (GLSGTGKTT). Residues lysine 194 and histidine 213 each coordinate Mn(2+). Aspartate 250 provides a ligand contact to Mn(2+). ATP-binding residues include glutamate 278, arginine 314, and threonine 439. Arginine 314 contributes to the substrate binding site.

The protein belongs to the phosphoenolpyruvate carboxykinase (ATP) family. Mn(2+) is required as a cofactor.

The protein resides in the cytoplasm. It catalyses the reaction oxaloacetate + ATP = phosphoenolpyruvate + ADP + CO2. The protein operates within carbohydrate biosynthesis; gluconeogenesis. In terms of biological role, involved in the gluconeogenesis. Catalyzes the conversion of oxaloacetate (OAA) to phosphoenolpyruvate (PEP) through direct phosphoryl transfer between the nucleoside triphosphate and OAA. This Campylobacter lari (strain RM2100 / D67 / ATCC BAA-1060) protein is Phosphoenolpyruvate carboxykinase (ATP).